The chain runs to 886 residues: uncharacterized protein (886 aa).

A signal peptide spans 1–20 (MKIIKSLILLVLFMASPAKG). Helical transmembrane passes span 520–540 (VTIF…VEVV), 609–629 (LLFI…IITI), 647–667 (VIAF…IILM), 680–700 (ISIL…FLLI), and 779–799 (LLFY…TIVV). The interval 856 to 886 (EARKPQGGGEHTGKFFQNRNDVKPEQTERND) is disordered. Residues 875-886 (NDVKPEQTERND) are compositionally biased toward basic and acidic residues.

It belongs to the TrbL/VirB6 family.

The protein resides in the cell membrane. This is an uncharacterized protein from Rickettsia bellii (strain RML369-C).